A 92-amino-acid chain; its full sequence is Precursor of elicitor peptide 1 (92 aa).

Positions 1–69 are excised as a propeptide; that stretch reads MEKSDRRSEE…EKEEVVVTSR (69 aa). The tract at residues 35-92 is disordered; that stretch reads HQDSPTTSSPGTSKQPKEEKEDVTMEKEEVVVTSRATKVKAKQRGKEKVSSGRPGQHN. A compositionally biased stretch (polar residues) spans 37-48; sequence DSPTTSSPGTSK. Over residues 49–64 the composition is skewed to basic and acidic residues; it reads QPKEEKEDVTMEKEEV.

Belongs to the brassicaceae elicitor peptide family. In terms of assembly, interacts with its receptor PEPR1.

Elicitor of plant defense. Induces the production of plant defensin (PDF1.2) and of H(2)O(2). Promotes resistance to the root fungal pathogen P.irregulare. Triggers the expression of several PROSCOOP genes (e.g. PROSCOOP2, PROSCOOP7, PROSCOOP8, PROSCOOP12 and PROSCOOP13). This chain is Precursor of elicitor peptide 1, found in Arabidopsis thaliana (Mouse-ear cress).